A 390-amino-acid chain; its full sequence is RNA-binding motif protein, X chromosome (390 aa).

Met1 is modified (N-acetylmethionine; in Heterogeneous nuclear ribonucleoprotein G; alternate). An N-acetylvaline; in Heterogeneous nuclear ribonucleoprotein G, N-terminally processed modification is found at Val2. The RRM domain occupies 8–86 (GKLFIGGLNT…KAIKVEQATK (79 aa)). Lys22 participates in a covalent cross-link: Glycyl lysine isopeptide (Lys-Gly) (interchain with G-Cter in SUMO2). The residue at position 30 (Lys30) is an N6-acetyllysine. The disordered stretch occupies residues 58–390 (SPADAKDAAR…RSDRGGRSRY (333 aa)). A compositionally biased stretch (basic and acidic residues) spans 60–80 (ADAKDAARDMNGKSLDGKAIK). Residues Lys80 and Lys86 each participate in a glycyl lysine isopeptide (Lys-Gly) (interchain with G-Cter in SUMO2) cross-link. Residues Ser88 and Ser91 each carry the phosphoserine modification. Positions 109-120 (LRGGRGGSGGTR) are enriched in gly residues. An omega-N-methylarginine mark is found at Arg125, Arg144, and Arg164. The span at 151–164 (RGPPPRSGGPPPKR) shows a compositional bias: pro residues. Ser165 is modified (phosphoserine). An Omega-N-methylarginine modification is found at Arg172. The residue at position 174 (Ser174) is a Phosphoserine. Composition is skewed to basic and acidic residues over residues 194–215 (PRRE…DGYS) and 241–274 (YTYR…DYSD). Residues Ser261, Ser329, Ser330, and Ser332 each carry the phosphoserine modification. Over residues 323 to 337 (SRDSYTSSRSDLYSS) the composition is skewed to low complexity. Over residues 338–347 (GRDRVGRQER) the composition is skewed to basic and acidic residues. Ser352 carries the phosphoserine modification. Residues 362–371 (DSYSSSSRGA) show a composition bias toward low complexity. Residues 380–390 (SRSDRGGRSRY) show a composition bias toward basic and acidic residues.

As to quaternary structure, homomultimer. Found in the supraspliceosome complex Identified in the spliceosome C complex. Interacts with KHDRBS3. Forms a complex with ILF2, ILF3, YLPM1, KHDRBS1, NCOA5 and PPP1CA. Interacts with SAFB/SAFB1. Interacts with ERAP1; the interaction is RNA-independent. Interacts with CLK2, KHDRBS2, SAFB, TRA2B and YTHDC1. Interacts with PPIA/CYPA. In terms of processing, O-glycosylated. Arg-182 is dimethylated, probably to asymmetric dimethylarginine. As to expression, expressed in brain, spleen, lung, liver, kidney, testis and heart. Weakly expressed in skeletal muscle (at protein level).

It localises to the nucleus. Functionally, RNA-binding protein that plays several role in the regulation of pre- and post-transcriptional processes. Implicated in tissue-specific regulation of gene transcription and alternative splicing of several pre-mRNAs. Binds to and stimulates transcription from the tumor suppressor TXNIP gene promoter; may thus be involved in tumor suppression. When associated with SAFB, binds to and stimulates transcription from the SREBF1 promoter. Associates with nascent mRNAs transcribed by RNA polymerase II. Component of the supraspliceosome complex that regulates pre-mRNA alternative splice site selection. Can either activate or suppress exon inclusion; acts additively with TRA2B to promote exon 7 inclusion of the survival motor neuron SMN. Represses the splicing of MAPT/Tau exon 10. Binds preferentially to single-stranded 5'-CC[A/C]-rich RNA sequence motifs localized in a single-stranded conformation; probably binds RNA as a homodimer. Binds non-specifically to pre-mRNAs. Also plays a role in the cytoplasmic TNFR1 trafficking pathways; promotes both the IL-1-beta-mediated inducible proteolytic cleavage of TNFR1 ectodomains and the release of TNFR1 exosome-like vesicles to the extracellular compartment. The polypeptide is RNA-binding motif protein, X chromosome (Rbmx) (Rattus norvegicus (Rat)).